A 614-amino-acid polypeptide reads, in one-letter code: Putative ankyrin repeat protein RBE_0997 (614 aa).

ANK repeat units follow at residues 3 to 32 (KDEE…DPNI), 36 to 65 (DDKP…NPNA), 69 to 98 (DGEP…DPNL), 102 to 131 (RKNT…NLNA), 135 to 164 (SGYP…NPNL), 168 to 197 (DGSP…NVEA), 201 to 231 (DGNT…DKEK), 239 to 268 (NGET…TVNI), and 272 to 301 (AGYT…ELKE). Residues 348 to 580 (NVEDIDYRKI…VQSAETFMNK (233 aa)) enclose the Glutamine amidotransferase type-1 domain. The active-site Nucleophile is the Cys444. Active-site residues include His547 and Glu549.

This chain is Putative ankyrin repeat protein RBE_0997, found in Rickettsia bellii (strain RML369-C).